The primary structure comprises 417 residues: GTP-binding protein YPT11 (417 aa).

The disordered stretch occupies residues 1 to 34 (MSQRKRYSLNVVTSPSIPSPTPSAPIRTNESNWE). GTP contacts are provided by residues 97–104 (GDANVGKT), 228–232 (DTAGQ), and 292–295 (NKID). S-geranylgeranyl cysteine attachment occurs at residues Cys-415 and Cys-416.

The protein belongs to the small GTPase superfamily. Rab family. As to quaternary structure, interacts with MYO2 (via C-terminal tail domain). Interacts with YIF1, YIP3, YIP4 and YIP5.

Its subcellular location is the endoplasmic reticulum membrane. The protein localises to the bud tip. The protein resides in the bud neck. Functionally, involved in the positive control of both endoplasmic reticulum (ER) and mitochondrion inheritance during cell divison. Required for the MYO2-dependent retention of newly inherited mitochondria at the bud tip in developing daughter cells. The polypeptide is GTP-binding protein YPT11 (YPT11) (Saccharomyces cerevisiae (strain RM11-1a) (Baker's yeast)).